A 1364-amino-acid polypeptide reads, in one-letter code: DNA-directed RNA polymerase subunit beta' (1364 aa).

The disordered stretch occupies residues 1–42 (MTSSSSKSNKSRKSSKAAKDTTPVHESASRPLSKTPPPFRNH). Zn(2+) is bound by residues cysteine 250, cysteine 317, cysteine 324, and cysteine 327.

Belongs to the RNA polymerase beta' chain family. RpoC2 subfamily. As to quaternary structure, in cyanobacteria the RNAP catalytic core is composed of 2 alpha, 1 beta, 1 beta', 1 gamma and 1 omega subunit. When a sigma factor is associated with the core the holoenzyme is formed, which can initiate transcription. Zn(2+) serves as cofactor.

It carries out the reaction RNA(n) + a ribonucleoside 5'-triphosphate = RNA(n+1) + diphosphate. Functionally, DNA-dependent RNA polymerase catalyzes the transcription of DNA into RNA using the four ribonucleoside triphosphates as substrates. The protein is DNA-directed RNA polymerase subunit beta' of Parasynechococcus marenigrum (strain WH8102).